Here is an 88-residue protein sequence, read N- to C-terminus: Probable Fe(2+)-trafficking protein (88 aa).

It belongs to the Fe(2+)-trafficking protein family.

In terms of biological role, could be a mediator in iron transactions between iron acquisition and iron-requiring processes, such as synthesis and/or repair of Fe-S clusters in biosynthetic enzymes. This Teredinibacter turnerae (strain ATCC 39867 / T7901) protein is Probable Fe(2+)-trafficking protein.